We begin with the raw amino-acid sequence, 564 residues long: MASTSTTIRSHSSSRRGFSANSARLPGVSRSGFSSISVSRSRGSGGLGGACGGAGFGSRSLYGLGGSKRISIGGGSCAISGGYGSRAGGSYGFGGAGSGFGFGGGAGIGFGLGGGAGLAGGFGGPGFPVCPPGGIQEVTVNQSLLTPLNLQIDPAIQRVRAEEREQIKTLNNKFASFIDKVRFLEQQNKVLDTKWTLLQEQGTKTVRQNLEPLFEQYINNLRRQLDSIVGERGRLDSELRNMQDLVEDLKNKYEDEINKRTAAENEFVTLKKDVDAAYMNKVELQAKADTLTDEINFLRALYDAELSQMQTHISDTSVVLSMDNNRNLDLDSIIAEVKAQYEEIAQRSRAEAESWYQTKYEELQVTAGRHGDDLRNTKQEIAEINRMIQRLRSEIDHVKKQCASLQAAIADAEQRGEMALKDAKNKLEGLEDALQKAKQDLARLLKEYQELMNVKLALDVEIATYRKLLEGEECRLNGEGVGQVNVSVVQSTISSGYGGASGVGSGLGLGGGSSYSYGSGLGIGGGFSSSSGRAIGGGLSSVGGGSSTIKYTTTSSSSRKSYKH.

Positions 1 to 11 are enriched in low complexity; the sequence is MASTSTTIRSH. The interval 1-23 is disordered; that stretch reads MASTSTTIRSHSSSRRGFSANSA. An N-acetylalanine modification is found at Ala-2. A head region spans residues 2–162; it reads ASTSTTIRSH…DPAIQRVRAE (161 aa). Ser-60 bears the Phosphoserine mark. A coil 1A region spans residues 163 to 198; sequence EREQIKTLNNKFASFIDKVRFLEQQNKVLDTKWTLL. An IF rod domain is found at 163–476; that stretch reads EREQIKTLNN…KLLEGEECRL (314 aa). The linker 1 stretch occupies residues 199–217; the sequence is QEQGTKTVRQNLEPLFEQY. Residues 218–309 are coil 1B; sequence INNLRRQLDS…ALYDAELSQM (92 aa). Residues 310-333 form a linker 12 region; sequence QTHISDTSVVLSMDNNRNLDLDSI. The tract at residues 334-472 is coil 2; the sequence is IAEVKAQYEE…ATYRKLLEGE (139 aa). The interval 473–564 is tail; that stretch reads ECRLNGEGVG…SSSSRKSYKH (92 aa).

It belongs to the intermediate filament family. In terms of assembly, heterodimer of a type I and a type II keratin. KRT6 isomers associate with KRT16 and/or KRT17. As to expression, constitutively expressed in distinct types of epithelia such as those in oral mucosa, esophagus, papillae of tongue and hair follicle outer root sheath.

This chain is Keratin, type II cytoskeletal 6C (KRT6C), found in Homo sapiens (Human).